We begin with the raw amino-acid sequence, 201 residues long: Small ribosomal subunit protein uS4c (201 aa).

The tract at residues 17 to 36 is disordered; sequence ALPGLTRKTPKSGSNLKKKF. One can recognise an S4 RNA-binding domain in the interval 89–157; sequence MRLDNILFRL…VQNYIASSDP (69 aa).

This sequence belongs to the universal ribosomal protein uS4 family. Part of the 30S ribosomal subunit. Contacts protein S5. The interaction surface between S4 and S5 is involved in control of translational fidelity.

It is found in the plastid. Its subcellular location is the chloroplast. Its function is as follows. One of the primary rRNA binding proteins, it binds directly to 16S rRNA where it nucleates assembly of the body of the 30S subunit. Functionally, with S5 and S12 plays an important role in translational accuracy. The protein is Small ribosomal subunit protein uS4c (rps4) of Agrostis stolonifera (Creeping bentgrass).